A 141-amino-acid chain; its full sequence is Hemoglobin subunit alpha-A (141 aa).

One can recognise a Globin domain in the interval 1–141 (VLSAADKNNV…VGTVLTAKYR (141 aa)). Histidine 58 is an O2 binding site. Histidine 87 contacts heme b.

This sequence belongs to the globin family. Heterotetramer of two alpha chains and two beta chains. In terms of tissue distribution, red blood cells.

In terms of biological role, involved in oxygen transport from the lung to the various peripheral tissues. In Phasianus colchicus colchicus (Black-necked pheasant), this protein is Hemoglobin subunit alpha-A (HBAA).